The following is a 539-amino-acid chain: Acid-sensing ion channel 4 (539 aa).

Residues 1–68 lie on the Cytoplasmic side of the membrane; that stretch reads MPIEIVCKIK…GPGPHGLRRT (68 aa). A helical membrane pass occupies residues 69-89; it reads LWALALLTSLAAFLYQAAGLA. Residues 90–438 lie on the Extracellular side of the membrane; the sequence is RGYLTRPHLV…EQRAAYGLSA (349 aa). 2 disulfides stabilise this stretch: Cys-118–Cys-202 and Cys-180–Cys-187. N-linked (GlcNAc...) asparagine glycosylation is found at Asn-191 and Asn-243. Disulfide bonds link Cys-296/Cys-375, Cys-318/Cys-371, Cys-322/Cys-369, Cys-331/Cys-353, and Cys-333/Cys-345. N-linked (GlcNAc...) asparagine glycosylation occurs at Asn-376. A helical transmembrane segment spans residues 439–459; it reads LLGDLGGQMGLFIGASILTLL. Positions 452 to 454 match the GAS motif; ion selectivity filter motif; the sequence is GAS. Residues 460-539 are Cytoplasmic-facing; that stretch reads EILDYIYEVS…PGGLFEDFAC (80 aa). The disordered stretch occupies residues 501-531; the sequence is EQSPCPSRGRVEGGGVSSLLPNHHHPHGPPG.

Belongs to the amiloride-sensitive sodium channel (TC 1.A.6) family. ASIC4 subfamily. As to quaternary structure, homotrimer. Heterotrimer; with other ASIC proteins producing functional channels. As to expression, expressed in pituitary gland. Weakly expressed in brain, vestibular system and organ of Corti.

The protein resides in the cell membrane. Its function is as follows. Does not exhibit measurable stand-alone pH-gated sodium channel activity but may form pH-gated heterotrimeric sodium channels. Its activity could also depend on alternative gating mechanisms. The polypeptide is Acid-sensing ion channel 4 (Homo sapiens (Human)).